A 268-amino-acid polypeptide reads, in one-letter code: Protein MSS18 (268 aa).

The protein to baculovirus occlusion-derived virus envelope protein E27 (ODV-E27).

The protein resides in the mitochondrion. Its function is as follows. Involved in splicing of intron aI5-beta of the mitochondrial COX1 transcript. The chain is Protein MSS18 (MSS18) from Saccharomyces cerevisiae (strain ATCC 204508 / S288c) (Baker's yeast).